The sequence spans 214 residues: Cytochrome c biogenesis ATP-binding export protein CcmA (214 aa).

In terms of domain architecture, ABC transporter spans 4-214 (LAVDQLTVSR…FDHGFDGAFL (211 aa)). Residue 36–43 (GPNGIGKT) coordinates ATP.

This sequence belongs to the ABC transporter superfamily. CcmA exporter (TC 3.A.1.107) family. The complex is composed of two ATP-binding proteins (CcmA) and two transmembrane proteins (CcmB).

It localises to the cell inner membrane. The catalysed reaction is heme b(in) + ATP + H2O = heme b(out) + ADP + phosphate + H(+). In terms of biological role, part of the ABC transporter complex CcmAB involved in the biogenesis of c-type cytochromes; once thought to export heme, this seems not to be the case, but its exact role is uncertain. Responsible for energy coupling to the transport system. This is Cytochrome c biogenesis ATP-binding export protein CcmA from Rhodobacter capsulatus (strain ATCC BAA-309 / NBRC 16581 / SB1003).